A 510-amino-acid chain; its full sequence is Cytochrome P450 monooxygenase macH (510 aa).

Residues leucine 7 to tyrosine 29 form a helical membrane-spanning segment. Cysteine 454 contacts heme.

Belongs to the cytochrome P450 family. It depends on heme as a cofactor.

It localises to the membrane. Its pathway is secondary metabolite biosynthesis; terpenoid biosynthesis. Functionally, cytochrome P450 monooxygenase; part of the gene cluster that mediates the biosynthesis of macrophorins, isoprenoid epoxycyclohexenones containing cyclized drimane moieties. The first step of the pathway is the synthesis of 6-methylsalicylic acid (6-MSA) by the polyketide synthase macA. 6-MSA is then converted to m-cresol by the decarboxylase macB. The cytochrome P450 monooxygenase macC then catalyzes the oxidation of m-cresol to toluquinol. Epoxidation of toluquinol is then performed by the short chain dehydrogenase macD, with the help of macE, and a further prenylation by macG leads to 7-deacetoxyyanuthone A. The next step is the hydroxylation of C-22 of 7-deacetoxyyanuthone A by the cytochrome P450 monooxygenase macH to yield 22-deacetylyanuthone A. O-Mevalon transferase macI then attaches mevalon to the hydroxyl group of 22-deacetylyanuthone A to produce yanuthone E. The terpene cyclase macJ catalyzes the cyclization of 22-deacetylyanuthone A to macrophorin A. MacJ is also able to catalyze cyclization of yanuthone E and 7-deacetoxyyanuthone A to their corresponding macrophorins. The macJ products can be further modified by macH and macJ, as well as by the FAD-dependent monooxygenase macF, to produce additional macrophorins, including 4'-oxomacrophorin A, 4'-oxomacrophorin D and 4'-oxomacrophorin E. The protein is Cytochrome P450 monooxygenase macH of Penicillium terrestre.